Here is a 205-residue protein sequence, read N- to C-terminus: Holliday junction branch migration complex subunit RuvA (205 aa).

Positions methionine 1–arginine 64 are domain I. Residues serine 65–valine 143 form a domain II region. The segment at arginine 144–alanine 154 is flexible linker. Residues alanine 154–lysine 205 form a domain III region.

Belongs to the RuvA family. As to quaternary structure, homotetramer. Forms an RuvA(8)-RuvB(12)-Holliday junction (HJ) complex. HJ DNA is sandwiched between 2 RuvA tetramers; dsDNA enters through RuvA and exits via RuvB. An RuvB hexamer assembles on each DNA strand where it exits the tetramer. Each RuvB hexamer is contacted by two RuvA subunits (via domain III) on 2 adjacent RuvB subunits; this complex drives branch migration. In the full resolvosome a probable DNA-RuvA(4)-RuvB(12)-RuvC(2) complex forms which resolves the HJ.

The protein localises to the cytoplasm. Functionally, the RuvA-RuvB-RuvC complex processes Holliday junction (HJ) DNA during genetic recombination and DNA repair, while the RuvA-RuvB complex plays an important role in the rescue of blocked DNA replication forks via replication fork reversal (RFR). RuvA specifically binds to HJ cruciform DNA, conferring on it an open structure. The RuvB hexamer acts as an ATP-dependent pump, pulling dsDNA into and through the RuvAB complex. HJ branch migration allows RuvC to scan DNA until it finds its consensus sequence, where it cleaves and resolves the cruciform DNA. The protein is Holliday junction branch migration complex subunit RuvA of Bradyrhizobium sp. (strain ORS 278).